Here is a 152-residue protein sequence, read N- to C-terminus: Ribonuclease pancreatic beta-type (152 aa).

A signal peptide spans 1–25 (MGLXKSFALFSLLVLVLGWVQPSLS). Positions 25–53 (SGESRESSADKFKRQHMDPDSPSKSSPTY) are disordered. A compositionally biased stretch (basic and acidic residues) spans 27–45 (ESRESSADKFKRQHMDPDS). Substrate is bound by residues lysine 35 and arginine 38. Histidine 40 acts as the Proton acceptor in catalysis. Disulfide bonds link cysteine 54/cysteine 112, cysteine 68/cysteine 123, cysteine 86/cysteine 138, and cysteine 93/cysteine 100. Residues 69–73 (KRVNT) and lysine 94 contribute to the substrate site. The active-site Proton donor is the histidine 147.

This sequence belongs to the pancreatic ribonuclease family. As to quaternary structure, monomer.

It localises to the secreted. The catalysed reaction is an [RNA] containing cytidine + H2O = an [RNA]-3'-cytidine-3'-phosphate + a 5'-hydroxy-ribonucleotide-3'-[RNA].. It carries out the reaction an [RNA] containing uridine + H2O = an [RNA]-3'-uridine-3'-phosphate + a 5'-hydroxy-ribonucleotide-3'-[RNA].. Endonuclease that catalyzes the cleavage of RNA on the 3' side of pyrimidine nucleotides. Acts on single-stranded and double-stranded RNA. The polypeptide is Ribonuclease pancreatic beta-type (Rattus tiomanicus (Malayan field rat)).